A 208-amino-acid polypeptide reads, in one-letter code: GATA transcription factor 29 (208 aa).

Residues 155-208 (GMKKCTNMNCNALNTPMWRRGPLGPKSLCNACGIKFRKEEERKAKRNVVIVLDD) form a GATA-type; atypical zinc finger.

Belongs to the type IV zinc-finger family. Class B subfamily.

The protein localises to the nucleus. Functionally, transcriptional regulator that specifically binds 5'-GATA-3' or 5'-GAT-3' motifs within gene promoters. This is GATA transcription factor 29 (GATA29) from Arabidopsis thaliana (Mouse-ear cress).